A 93-amino-acid polypeptide reads, in one-letter code: Putative septation protein SpoVG (93 aa).

The protein belongs to the SpoVG family.

In terms of biological role, could be involved in septation. The protein is Putative septation protein SpoVG of Treponema denticola (strain ATCC 35405 / DSM 14222 / CIP 103919 / JCM 8153 / KCTC 15104).